The primary structure comprises 776 residues: Protein SEY1 (776 aa).

The Cytoplasmic portion of the chain corresponds to 1-681; that stretch reads MADRSAIQLI…KRSIITTRTH (681 aa). A GB1/RHD3-type G domain is found at 34-263; the sequence is GLDYHVISVF…TENYYFKPQY (230 aa). 44 to 51 is a binding site for GTP; sequence GSQSSGKS. A helical membrane pass occupies residues 682–702; the sequence is IPPWIYVLLAVLGWNEFVAVI. Topologically, residues 703–705 are lumenal; that stretch reads RNP. Residues 706–726 traverse the membrane as a helical segment; the sequence is LFVTLTLILGATFFVIHKFGL. The Cytoplasmic segment spans residues 727–776; sequence WGPVVNVVQSAVGETRTAIKDKLRQFVVEDHEVKESFEMKDFSKNEQKEK.

Belongs to the TRAFAC class dynamin-like GTPase superfamily. GB1/RHD3 GTPase family. RHD3 subfamily. In terms of assembly, interacts with RTN1 and YOP1; GTP binding is not required for these interactions.

Its subcellular location is the endoplasmic reticulum membrane. Its function is as follows. Cooperates with the reticulon proteins RTN1 and RTN2 and the tubule-shaping DP1 family protein YOP1 to generate and maintain the structure of the tubular endoplasmic reticulum network. Has GTPase activity, which is required for its function in ER organization. The sequence is that of Protein SEY1 from Saccharomyces cerevisiae (strain AWRI1631) (Baker's yeast).